Reading from the N-terminus, the 511-residue chain is MTIVLRPGSVPLHHLADIYWNNGSAKLDPSFDAAVLKGAARIAEIAAGNAPVYGINTGFGKLASIKIDAADLATLQRNLILSHCCGVGAPLPENVVRLIMALKLISLGRGASGVRIELIRLIEGMLEKGVIPVIPEKGSVGASGDLAPLAHMSATMMGEGEAFYQGVQMPSKDALAKAGLSPVVLAAKEGLALINGTQTSTALALAGLFRAHRAAQSALVTGALSTDAAMGSSAPFHPDIHTLRGHKGQIDAGSALRNLLQGSEIRESHIEGDERVQDPYCIRCQPQVDGACLDLLASVARTLEIEANAVTDNPLVLSDNSVVSGGNFHAEPVAFAADQTALAVCEIGAIAQRRIALLVDPALSYGLPAFLSKKPGLNSGLMIAEVTSAALMSENKQMSHPASVDSTPTSANQEDHVSMACHGARRLLAMTDNLFGILGIEALAAVQGVELRGPLKTSPELEKAAAVLRSAVPVLEDDRYMATDLKAAIEVVASGALVSAISSGILPVLEA.

Positions 142–144 (ASG) form a cross-link, 5-imidazolinone (Ala-Gly). S143 bears the 2,3-didehydroalanine (Ser) mark.

This sequence belongs to the PAL/histidase family. In terms of processing, contains an active site 4-methylidene-imidazol-5-one (MIO), which is formed autocatalytically by cyclization and dehydration of residues Ala-Ser-Gly.

It is found in the cytoplasm. The catalysed reaction is L-histidine = trans-urocanate + NH4(+). The protein operates within amino-acid degradation; L-histidine degradation into L-glutamate; N-formimidoyl-L-glutamate from L-histidine: step 1/3. This is Histidine ammonia-lyase from Rhizobium rhizogenes (Agrobacterium rhizogenes).